The following is a 134-amino-acid chain: Small ribosomal subunit protein uS11 (134 aa).

Disordered stretches follow at residues 1 to 24 (MPPK…VAHG) and 115 to 134 (IQDV…RRRV). Over residues 9–18 (AVKKVRRKEK) the composition is skewed to basic residues.

Belongs to the universal ribosomal protein uS11 family. Part of the 30S ribosomal subunit. Interacts with proteins S7 and S18. Binds to IF-3.

Functionally, located on the platform of the 30S subunit, it bridges several disparate RNA helices of the 16S rRNA. Forms part of the Shine-Dalgarno cleft in the 70S ribosome. In Saccharopolyspora erythraea (strain ATCC 11635 / DSM 40517 / JCM 4748 / NBRC 13426 / NCIMB 8594 / NRRL 2338), this protein is Small ribosomal subunit protein uS11.